A 341-amino-acid chain; its full sequence is MRLEQPRNSLKRSTLDLIERVNRDEYPSLPQDSKCKDALVSAFRKTANFKKYNRPDVNSREQLISPSLTEEDLLGRIRQRYKEKIFAGGQEKFADQSFIAEQIASTYEDFKDNPTLPAYCGEMTYLLYYHLREEGIKPENMLVVGFSANAEDHVLLMYSSDEGFLEQIKNDYFEQEEEGEEAESYKNFIELCARRDKNQTLLLLDPWSQDNKILDLNQLDRDESTNEVIEDYFKNKREALEEGFQPHAIIDGVLEESRVSKATGSVINMETLSFQVDAFKPEELMEIDEENTSDSSEEGTSKNRFRDTLFSNVPDSSSDSENEQEREKKELAGKTPSFRLC.

Residues 287–297 (IDEENTSDSSE) are compositionally biased toward acidic residues. Residues 287–341 (IDEENTSDSSEEGTSKNRFRDTLFSNVPDSSSDSENEQEREKKELAGKTPSFRLC) form a disordered region. Over residues 323–332 (EQEREKKELA) the composition is skewed to basic and acidic residues.

It is found in the cytoplasm. In terms of biological role, may be involved in the pathogenesis of acute Q fever. The sequence is that of Protein CbhE (cbhE) from Coxiella burnetii (strain RSA 493 / Nine Mile phase I).